A 120-amino-acid polypeptide reads, in one-letter code: NAD(P)H-quinone oxidoreductase subunit 3 (120 aa).

The next 3 helical transmembrane spans lie at 6 to 26 (GYDA…LALI), 64 to 84 (MFAL…PWAV), and 89 to 109 (LGVL…VALA).

It belongs to the complex I subunit 3 family. As to quaternary structure, NDH-1 can be composed of about 15 different subunits; different subcomplexes with different compositions have been identified which probably have different functions.

It localises to the cellular thylakoid membrane. The enzyme catalyses a plastoquinone + NADH + (n+1) H(+)(in) = a plastoquinol + NAD(+) + n H(+)(out). The catalysed reaction is a plastoquinone + NADPH + (n+1) H(+)(in) = a plastoquinol + NADP(+) + n H(+)(out). In terms of biological role, NDH-1 shuttles electrons from an unknown electron donor, via FMN and iron-sulfur (Fe-S) centers, to quinones in the respiratory and/or the photosynthetic chain. The immediate electron acceptor for the enzyme in this species is believed to be plastoquinone. Couples the redox reaction to proton translocation, and thus conserves the redox energy in a proton gradient. Cyanobacterial NDH-1 also plays a role in inorganic carbon-concentration. The polypeptide is NAD(P)H-quinone oxidoreductase subunit 3 (Parasynechococcus marenigrum (strain WH8102)).